Reading from the N-terminus, the 602-residue chain is Elongation factor 4 (602 aa).

The tr-type G domain maps to 7-189 (KYIRNFCIIA…KIVDMIPCPE (183 aa)). Residues 19–24 (DHGKST) and 136–139 (NKID) each bind GTP.

The protein belongs to the TRAFAC class translation factor GTPase superfamily. Classic translation factor GTPase family. LepA subfamily.

Its subcellular location is the cell membrane. The catalysed reaction is GTP + H2O = GDP + phosphate + H(+). Its function is as follows. Required for accurate and efficient protein synthesis under certain stress conditions. May act as a fidelity factor of the translation reaction, by catalyzing a one-codon backward translocation of tRNAs on improperly translocated ribosomes. Back-translocation proceeds from a post-translocation (POST) complex to a pre-translocation (PRE) complex, thus giving elongation factor G a second chance to translocate the tRNAs correctly. Binds to ribosomes in a GTP-dependent manner. The polypeptide is Elongation factor 4 (Ruminiclostridium cellulolyticum (strain ATCC 35319 / DSM 5812 / JCM 6584 / H10) (Clostridium cellulolyticum)).